Reading from the N-terminus, the 169-residue chain is Ribosome maturation factor RimM (169 aa).

The PRC barrel domain maps to 97–169 (EDEVYFKDLI…KIVVDWEYDY (73 aa)).

This sequence belongs to the RimM family. In terms of assembly, binds ribosomal protein uS19.

It localises to the cytoplasm. In terms of biological role, an accessory protein needed during the final step in the assembly of 30S ribosomal subunit, possibly for assembly of the head region. Essential for efficient processing of 16S rRNA. May be needed both before and after RbfA during the maturation of 16S rRNA. It has affinity for free ribosomal 30S subunits but not for 70S ribosomes. In Francisella tularensis subsp. tularensis (strain FSC 198), this protein is Ribosome maturation factor RimM.